The primary structure comprises 242 residues: Venom nerve growth factor 2 (242 aa).

An N-terminal signal peptide occupies residues Met-1–Ala-18. The propeptide occupies Ala-19–Arg-125. A compositionally biased stretch (basic and acidic residues) spans Asp-47–Asp-66. Residues Asp-47–Gly-70 are disordered. Disulfide bonds link Cys-139-Cys-203, Cys-181-Cys-231, and Cys-191-Cys-233.

It belongs to the NGF-beta family. As to quaternary structure, homodimer; non-covalently linked. In terms of tissue distribution, expressed by the venom gland.

It is found in the secreted. Its function is as follows. Nerve growth factor is important for the development and maintenance of the sympathetic and sensory nervous systems. It stimulates division and differentiation of sympathetic and embryonic sensory neurons as well as basal forebrain cholinergic neurons in the brain. Its relevance in the snake venom is not clear. However, it has been shown to inhibit metalloproteinase-dependent proteolysis of platelet glycoprotein Ib alpha, suggesting a metalloproteinase inhibition to prevent metalloprotease autodigestion and/or protection against prey proteases. Binds a lipid between the two protein chains in the homodimer. The lipid-bound form promotes histamine relase from mouse mast cells, contrary to the lipid-free form. The polypeptide is Venom nerve growth factor 2 (Pseudechis australis (Mulga snake)).